We begin with the raw amino-acid sequence, 145 residues long: UPF0735 ACT domain-containing protein CPE1414 (145 aa).

The ACT domain maps to 69–144 (IFNMVVTHEK…GVEKVEFVAM (76 aa)).

This sequence belongs to the UPF0735 family.

This Clostridium perfringens (strain 13 / Type A) protein is UPF0735 ACT domain-containing protein CPE1414.